We begin with the raw amino-acid sequence, 529 residues long: Probable threonine/serine exporter (529 aa).

10 helical membrane passes run Ile-88–Ile-108, Phe-168–Val-188, Val-212–Asp-232, Thr-234–Met-254, Ala-265–Ile-285, Met-312–Ile-332, Ala-344–Gly-364, Arg-365–Ile-385, Ala-389–Phe-409, and Leu-428–Leu-448. The disordered stretch occupies residues Gln-482–Ala-501.

It belongs to the ThrE exporter (TC 2.A.79) family.

It is found in the cell membrane. The catalysed reaction is L-threonine(in) + H(+)(out) = L-threonine(out) + H(+)(in). In terms of biological role, catalyzes the export of L-threonine and L-serine from the cell to the extracellular environment. Export is dependent on the proton motive force. Required for in vitro growth and survival of bacteria inside macrophages. Increased expression is associated with low-level amikacin (AMK) resistance. This chain is Probable threonine/serine exporter, found in Mycobacterium tuberculosis (strain ATCC 25618 / H37Rv).